The sequence spans 224 residues: Cardosin-E (224 aa).

The Peptidase A1 domain maps to 1–221; that stretch reads DSGSAIVALT…DYGNLLVGFA (221 aa). Asp-35 is an active-site residue. Cys-125 and Cys-129 are joined by a disulfide. Residue Asp-134 is part of the active site.

The protein belongs to the peptidase A1 family. Heterodimer of a light chain and a heavy chain. An intermediate form is produced first, and undergoes proteolytic processing to remove the internal plant-specific insert (PSI) and the propeptide. N-glycosylated. Pistils.

It is found in the microsome membrane. The protein localises to the protein storage vacuole. Its subcellular location is the secreted. The protein resides in the cell wall. It localises to the extracellular space. It is found in the extracellular matrix. With respect to regulation, inhibited by pepstatin. In terms of biological role, aspartic protease with a high preference for bonds between hydrophobic residues. This chain is Cardosin-E, found in Cynara cardunculus (Cardoon).